A 157-amino-acid polypeptide reads, in one-letter code: UPF0262 protein Rleg2_0240 (157 aa).

This sequence belongs to the UPF0262 family.

This chain is UPF0262 protein Rleg2_0240, found in Rhizobium leguminosarum bv. trifolii (strain WSM2304).